The primary structure comprises 527 residues: ATP synthase subunit alpha (527 aa).

169–176 (GDRQTGKT) is a binding site for ATP.

Belongs to the ATPase alpha/beta chains family. In terms of assembly, F-type ATPases have 2 components, CF(1) - the catalytic core - and CF(0) - the membrane proton channel. CF(1) has five subunits: alpha(3), beta(3), gamma(1), delta(1), epsilon(1). CF(0) has three main subunits: a(1), b(2) and c(9-12). The alpha and beta chains form an alternating ring which encloses part of the gamma chain. CF(1) is attached to CF(0) by a central stalk formed by the gamma and epsilon chains, while a peripheral stalk is formed by the delta and b chains.

The protein localises to the cell membrane. It carries out the reaction ATP + H2O + 4 H(+)(in) = ADP + phosphate + 5 H(+)(out). Its function is as follows. Produces ATP from ADP in the presence of a proton gradient across the membrane. The alpha chain is a regulatory subunit. This chain is ATP synthase subunit alpha, found in Metamycoplasma arthritidis (strain 158L3-1) (Mycoplasma arthritidis).